Here is a 942-residue protein sequence, read N- to C-terminus: Protein inturned (942 aa).

Disordered stretches follow at residues 1–56 and 128–156; these read MAGL…PEWL and LPRR…KTGV. The segment covering 22 to 32 has biased composition (acidic residues); sequence SQEEEEEEGDS. The segment covering 33–48 has biased composition (low complexity); it reads DAGASSLGSYSSASSD. The span at 137 to 156 shows a compositional bias: polar residues; that stretch reads SSNNGPVSILKHQSSQKTGV. One can recognise a PDZ domain in the interval 185–267; sequence LLEVLVGIIH…PMQVKLTFEN (83 aa). Phosphoserine occurs at positions 674 and 678. Residues 707–751 form a disordered region; that stretch reads KARKPSPSRIGGGREPTEGEESAGLSPHATPDAVRKQRESEGSDD.

It belongs to the inturned family. As to quaternary structure, component of the CPLANE (ciliogenesis and planar polarity effectors) complex, composed of INTU, FUZ and WDPCP. Interacts with CPLANE1. Interacts with NPHP4 and DAAM1; INTU is mediating the interaction between NPHP4 and DAAM1. As to expression, widely expressed in E8.5 and E9.5 wild type embryos. Present in various adult organs (at protein level).

The protein localises to the cytoplasm. The protein resides in the cell surface. Its subcellular location is the cytoskeleton. It is found in the cilium basal body. It localises to the microtubule organizing center. The protein localises to the centrosome. The protein resides in the centriole. Plays a key role in ciliogenesis and embryonic development. Regulator of cilia formation by controlling the organization of the apical actin cytoskeleton and the positioning of the basal bodies at the apical cell surface, which in turn is essential for the normal orientation of elongating ciliary microtubules. Plays a key role in definition of cell polarity via its role in ciliogenesis but not via conversion extension. Has an indirect effect on hedgehog signaling. Proposed to function as core component of the CPLANE (ciliogenesis and planar polarity effectors) complex involved in the recruitment of peripheral IFT-A proteins to basal bodies. Required for recruitment of CPLANE2 to the mother centriole. Binds phosphatidylinositol 3-phosphate with highest affinity, followed by phosphatidylinositol 4-phosphate and phosphatidylinositol 5-phosphate. This is Protein inturned (Intu) from Mus musculus (Mouse).